The following is a 293-amino-acid chain: ATP synthase gamma chain (293 aa).

This sequence belongs to the ATPase gamma chain family. In terms of assembly, F-type ATPases have 2 components, CF(1) - the catalytic core - and CF(0) - the membrane proton channel. CF(1) has five subunits: alpha(3), beta(3), gamma(1), delta(1), epsilon(1). CF(0) has three main subunits: a, b and c.

The protein localises to the cell inner membrane. Its function is as follows. Produces ATP from ADP in the presence of a proton gradient across the membrane. The gamma chain is believed to be important in regulating ATPase activity and the flow of protons through the CF(0) complex. This is ATP synthase gamma chain from Chlorobium chlorochromatii (strain CaD3).